The sequence spans 1692 residues: Fatty acid synthase alpha subunit hexA (1692 aa).

The interval 44 to 80 is disordered; the sequence is AVEEPVDETPAPETAPERPPLSRAKTAAVKPQETAAP. A Carrier domain is found at 90–174; that stretch reads LSAEEIVRAL…RVSSALLSKL (85 aa). Ser125 is subject to O-(pantetheine 4'-phosphoryl)serine. Residues 508–746 are ketoreductase (KR) domain; sequence FAGKNILITG…IAMLMTPELV (239 aa). The 483-residue stretch at 948–1430 folds into the Ketosynthase family 3 (KS3) domain; sequence KEYLHEVAVE…QKGGQVVGVA (483 aa). Cys1135 serves as the catalytic For beta-ketoacyl synthase activity. Positions 1263 to 1287 are disordered; the sequence is GQAQLDKSSPSTNTTSRTSSVSLAR. Residues 1270 to 1284 show a composition bias toward low complexity; sequence SSPSTNTTSRTSSVS. Active-site for beta-ketoacyl synthase activity residues include His1315 and His1356. Asp1569 contacts Mg(2+). Residues 1569–1571, 1615–1625, 1639–1642, and 1668–1670 each bind acetyl-CoA; these read DLV, EAVFKCLHTQT, KSDN, and ISH. Mg(2+) is bound at residue Ser1669.

This sequence belongs to the thiolase-like superfamily. Fungal fatty acid synthetase subunit alpha family. As to quaternary structure, [Alpha(6)beta(6)] hexamers of two multifunctional subunits (alpha and beta). In terms of processing, 4'-phosphopantetheine is transferred from CoA to a specific serine of the acyl carrier domain by the C-terminal PPT domain. This modification is essential for activity because fatty acids are bound in thioester linkage to the sulfhydryl of the prosthetic group.

The enzyme catalyses acetyl-CoA + n malonyl-CoA + 2n NADPH + 4n H(+) = a long-chain-acyl-CoA + n CoA + n CO2 + 2n NADP(+).. It carries out the reaction a fatty acyl-[ACP] + malonyl-[ACP] + H(+) = a 3-oxoacyl-[ACP] + holo-[ACP] + CO2. The catalysed reaction is a (3R)-hydroxyacyl-[ACP] + NADP(+) = a 3-oxoacyl-[ACP] + NADPH + H(+). It participates in mycotoxin biosynthesis. In terms of biological role, fatty acid synthase alpha subunit; part of the fragmented gene cluster that mediates the biosynthesis of dothistromin (DOTH), a polyketide toxin very similar in structure to the aflatoxin precursor, versicolorin B. The first step of the pathway is the conversion of acetate to norsolorinic acid (NOR) and requires the fatty acid synthase subunits hexA and hexB, as well as the polyketide synthase pksA. PksA combines a hexanoyl starter unit and 7 malonyl-CoA extender units to synthesize the precursor NOR. The hexanoyl starter unit is provided to the acyl-carrier protein (ACP) domain by the fungal fatty acid synthase hexA/hexB. The second step is the conversion of NOR to averantin (AVN) and requires the norsolorinic acid ketoreductase nor1, which catalyzes the dehydration of norsolorinic acid to form (1'S)-averantin. The cytochrome P450 monooxygenase avnA then catalyzes the hydroxylation of AVN to 5'hydroxyaverantin (HAVN). The next step is performed by adhA that transforms HAVN to averufin (AVF). Averufin might then be converted to hydroxyversicolorone by cypX and avfA. Hydroxyversicolorone is further converted versiconal hemiacetal acetate (VHA) by moxY. VHA is then the substrate for the versiconal hemiacetal acetate esterase est1 to yield versiconal (VAL). Versicolorin B synthase vbsA then converts VAL to versicolorin B (VERB) by closing the bisfuran ring. Then, the activity of the versicolorin B desaturase verB leads to versicolorin A (VERA). DotB, a predicted chloroperoxidase, may perform epoxidation of the A-ring of VERA. Alternatively, a cytochrome P450, such as cypX or avnA could catalyze this step. It is also possible that another, uncharacterized, cytochrome P450 enzyme is responsible for this step. Opening of the epoxide could potentially be achieved by the epoxide hydrolase epoA. However, epoA seems not to be required for DOTH biosynthesis, but other epoxide hydrolases may have the ability to complement this hydrolysis. Alternatively, opening of the epoxide ring could be achieved non-enzymatically. The next step is the deoxygenation of ring A to yield the 5,8-dihydroxyanthraquinone which is most likely catalyzed by the NADPH dehydrogenase encoded by ver1. The last stages of DOTH biosynthesis are proposed to involve hydroxylation of the bisfuran. OrdB and norB might have oxidative roles here. An alternative possibility is that cytochrome P450 monoogenases such as avnA and cypX might perform these steps in addition to previously proposed steps. This Dothistroma septosporum (strain NZE10 / CBS 128990) (Red band needle blight fungus) protein is Fatty acid synthase alpha subunit hexA.